The following is a 513-amino-acid chain: Maturase K (513 aa).

The protein belongs to the intron maturase 2 family. MatK subfamily.

Its subcellular location is the plastid. It localises to the chloroplast. In terms of biological role, usually encoded in the trnK tRNA gene intron. Probably assists in splicing its own and other chloroplast group II introns. The sequence is that of Maturase K from Typha latifolia (Bulrush).